A 190-amino-acid chain; its full sequence is Protein GrpE (190 aa).

The span at 1–11 (MSNQDEPQNSP) shows a compositional bias: polar residues. The tract at residues 1–36 (MSNQDEPQNSPEEFAEDQQADVALEEASSDSSETAA) is disordered. The span at 13–28 (EFAEDQQADVALEEAS) shows a compositional bias: acidic residues.

The protein belongs to the GrpE family. Homodimer.

Its subcellular location is the cytoplasm. Its function is as follows. Participates actively in the response to hyperosmotic and heat shock by preventing the aggregation of stress-denatured proteins, in association with DnaK and GrpE. It is the nucleotide exchange factor for DnaK and may function as a thermosensor. Unfolded proteins bind initially to DnaJ; upon interaction with the DnaJ-bound protein, DnaK hydrolyzes its bound ATP, resulting in the formation of a stable complex. GrpE releases ADP from DnaK; ATP binding to DnaK triggers the release of the substrate protein, thus completing the reaction cycle. Several rounds of ATP-dependent interactions between DnaJ, DnaK and GrpE are required for fully efficient folding. The chain is Protein GrpE from Teredinibacter turnerae (strain ATCC 39867 / T7901).